A 604-amino-acid polypeptide reads, in one-letter code: Kelch-like protein 20 (604 aa).

One can recognise a BTB domain in the interval 63–130 (CDVVLVVGAK…SYTSQITVEE (68 aa)). Positions 165-267 (CLGIRAFADT…SPKFLVGTVG (103 aa)) constitute a BACK domain. Kelch repeat units follow at residues 314-360 (VLFA…VLDD), 362-408 (LYAV…VLGG), 409-455 (YLYA…VLGG), 457-502 (LYAV…VYQD), 504-549 (IYAV…VVNG), and 551-596 (LMAV…VIKM).

Component of the BCR(KLHL20) E3 ubiquitin ligase complex, at least composed of cul3, klhl20 and rbx1.

It is found in the cytoplasm. The protein localises to the perinuclear region. It localises to the nucleus. Its pathway is protein modification; protein ubiquitination. In terms of biological role, substrate-specific adapter of a BCR (BTB-CUL3-RBX1) E3 ubiquitin-protein ligase complex involved in interferon response and anterograde Golgi to endosome transport. The BCR(KLHL20) E3 ubiquitin ligase complex mediates the ubiquitination of target proteins, leading to their degradation by the proteasome. It also specifically mediates 'Lys-33'-linked ubiquitination. This Xenopus laevis (African clawed frog) protein is Kelch-like protein 20 (klhl20).